The sequence spans 172 residues: Peptide deformylase-like (172 aa).

Glu134 is a catalytic residue.

This sequence belongs to the polypeptide deformylase family.

The protein is Peptide deformylase-like of Rhizobium meliloti (strain 1021) (Ensifer meliloti).